Consider the following 149-residue polypeptide: Decarboxylase AgnL1 (149 aa).

The EthD domain maps to 30 to 125 (PGMSEEDYRH…VGDHEKFADT (96 aa)).

This sequence belongs to the tpcK family.

The catalysed reaction is atrochrysone carboxylate + H(+) = atrochrysone + CO2. Its pathway is secondary metabolite biosynthesis. Decarboxylase; part of the gene cluster that mediates the biosynthesis of agnestins, dihydroxy-xanthone metabolites. The pathway begins with the assembly and cyclization of atrochrysone thioester by the non-reducing polyketide synthase Agnpks1. The atrochrysone carboxyl ACP thioesterase AgnL7 then breaks the thioester bond and releases the atrochrysone carboxylic acid as the first enzyme-free intermediate. The decarboxylase AgnL1 then catalyzes the concerted decarboxylation-elimination required to convert atochrysone carboxylic acid into emodin anthrone, which is further oxidized to emodin by the anthrone oxygenase AgnL2. Emodin then undergoes reduction catalyzed by the oxidoreductase AgnL4 to yield the dihydroquinone tautomer which is the substrate for reduction by the short chain dehydrogenase AgnL6 reduction to produce hydroxyketone, followed by AgnL8 dehydration and likely spontaneous autoxidation to chrysophanol. Baeyer-Villiger oxidation by the oxidase AgnL3 leads to monodictyphenone via cleavage of the C-10/C-10a bond of chrysophanol. Alternative cleavage at the C-4a/C-10 bond of chrysophanol also leads to the formation some cephalone F. Further conversion to agnestins A and B, requires reduction to dihydro-monodictyphenone, oxidation to agnestin C probably via an epoxide, and rearrangement to either agnestin A or agnestin B directly, although agnestin A or agnestin B can also interconvert. Within the cluster, AgnR1 is the only unassigned oxidoreductase present which could be involved in this conversion. However, AgnR1 seems not to be involved in this step, and thus genes involved in the proposed oxidation/reduction may be located elsewhere on the genome. Further agnestin A derivatives are probably formed by spontaneous decarboxylations, dehydrations and methanolysis reactions. This is Decarboxylase AgnL1 from Paecilomyces divaricatus (Penicillium divaricatum).